The chain runs to 243 residues: Carboxy-S-adenosyl-L-methionine synthase (243 aa).

S-adenosyl-L-methionine-binding positions include Tyr-40, Gly-65–Ser-67, Asp-90–Asn-91, Asp-118–Ile-119, Asn-133, and Arg-200.

Belongs to the class I-like SAM-binding methyltransferase superfamily. Cx-SAM synthase family. Homodimer.

The enzyme catalyses prephenate + S-adenosyl-L-methionine = carboxy-S-adenosyl-L-methionine + 3-phenylpyruvate + H2O. Catalyzes the conversion of S-adenosyl-L-methionine (SAM) to carboxy-S-adenosyl-L-methionine (Cx-SAM). The chain is Carboxy-S-adenosyl-L-methionine synthase from Shewanella sp. (strain ANA-3).